Consider the following 233-residue polypeptide: Esterase FUS5 (233 aa).

Residues serine 105, aspartate 159, and histidine 187 each act as charge relay system in the active site.

It belongs to the LovG family.

In terms of biological role, esterase; part of the gene cluster that mediates the biosynthesis of the mycotoxin fusarin C. Within the cluster, FUS1, FUS2, FUS8 and FUS9 are sufficient for fusarin production. The other FUS cluster members are not essential for fusarin C biosynthesis. In Gibberella fujikuroi (strain CBS 195.34 / IMI 58289 / NRRL A-6831) (Bakanae and foot rot disease fungus), this protein is Esterase FUS5.